The primary structure comprises 340 residues: Anthranilate phosphoribosyltransferase (340 aa).

Residues Gly-84, 87–88, Thr-92, 94–97, 112–120, and Ser-124 contribute to the 5-phospho-alpha-D-ribose 1-diphosphate site; these read GD, NIST, and KHGSRSVSS. Gly-84 serves as a coordination point for anthranilate. Ser-96 lines the Mg(2+) pocket. Position 170 (Arg-170) interacts with anthranilate. Asp-228 and Glu-229 together coordinate Mg(2+).

It belongs to the anthranilate phosphoribosyltransferase family. As to quaternary structure, homodimer. It depends on Mg(2+) as a cofactor.

The enzyme catalyses N-(5-phospho-beta-D-ribosyl)anthranilate + diphosphate = 5-phospho-alpha-D-ribose 1-diphosphate + anthranilate. Its pathway is amino-acid biosynthesis; L-tryptophan biosynthesis; L-tryptophan from chorismate: step 2/5. Functionally, catalyzes the transfer of the phosphoribosyl group of 5-phosphorylribose-1-pyrophosphate (PRPP) to anthranilate to yield N-(5'-phosphoribosyl)-anthranilate (PRA). This is Anthranilate phosphoribosyltransferase from Psychromonas ingrahamii (strain DSM 17664 / CCUG 51855 / 37).